Here is a 122-residue protein sequence, read N- to C-terminus: Large ribosomal subunit protein uL18 (122 aa).

This sequence belongs to the universal ribosomal protein uL18 family. Part of the 50S ribosomal subunit; part of the 5S rRNA/L5/L18/L25 subcomplex. Contacts the 5S and 23S rRNAs.

This is one of the proteins that bind and probably mediate the attachment of the 5S RNA into the large ribosomal subunit, where it forms part of the central protuberance. This Geotalea uraniireducens (strain Rf4) (Geobacter uraniireducens) protein is Large ribosomal subunit protein uL18.